We begin with the raw amino-acid sequence, 350 residues long: Probable arabinogalactan endo-beta-1,4-galactanase A (350 aa).

The N-terminal stretch at 1–16 is a signal peptide; that stretch reads MIYSLLLSALPLLSSA. The N-linked (GlcNAc...) asparagine glycan is linked to asparagine 128. Glutamate 152 serves as the catalytic Proton donor. Glutamate 262 functions as the Nucleophile in the catalytic mechanism.

Belongs to the glycosyl hydrolase 53 family.

Its subcellular location is the secreted. It catalyses the reaction The enzyme specifically hydrolyzes (1-&gt;4)-beta-D-galactosidic linkages in type I arabinogalactans.. Its function is as follows. Endogalactanase involved in the degradation of plant cell wall polysaccharides, and more particularly of hairy regions of pectin. This is Probable arabinogalactan endo-beta-1,4-galactanase A (galA) from Aspergillus niger (strain ATCC MYA-4892 / CBS 513.88 / FGSC A1513).